A 450-amino-acid chain; its full sequence is MGAPPGYRPSAWVHLLHQLPRADFQLRPVPSAFAPQEREYQQALLLVAALAGLGLGLSLIFIAVYLIRFCCCRPPEPPGAKSPPPGGGCVTWNCIAALLVGCAGIGVGFYGNSETSDGVSQLSSALLHANHTLTAIDHLVLEMVERLNEAVRTELTTLEEVLTQRTELVAAARGARRQAETVAQQLQGLAFWRGVPLSPLQVAEDVSFVEEYRWLAYVLLLLLELLVCLFTLLGLARQSKWLVIVMTVMSLLVLVLSWGSMGLEAATAVGLSDFCSSPDSYILNLTQEETGLGSDILNYYFLCNQAVSNPFQQRLTLSQRALANIHSQLQGLEREAVPQFPSAQKPVLSLEETLNVTEGNFHQLVALLHCRGLHKDYGSALRGLCEDTLEGLLFLLLFSLLSAGALATVLCSLPRAWALFPPSDDYEDTDDDDPFNPQESKRFVQWQSSI.

The Extracellular portion of the chain corresponds to 1–43 (MGAPPGYRPSAWVHLLHQLPRADFQLRPVPSAFAPQEREYQQA). The helical transmembrane segment at 44–64 (LLLVAALAGLGLGLSLIFIAV) threads the bilayer. The Cytoplasmic portion of the chain corresponds to 65–88 (YLIRFCCCRPPEPPGAKSPPPGGG). Residues 89 to 109 (CVTWNCIAALLVGCAGIGVGF) form a helical membrane-spanning segment. Over 110–214 (YGNSETSDGV…DVSFVEEYRW (105 aa)) the chain is Extracellular. N-linked (GlcNAc...) asparagine glycosylation is present at Asn-130. A helical membrane pass occupies residues 215–235 (LAYVLLLLLELLVCLFTLLGL). Residues 236 to 240 (ARQSK) lie on the Cytoplasmic side of the membrane. The helical transmembrane segment at 241–261 (WLVIVMTVMSLLVLVLSWGSM) threads the bilayer. At 262–390 (GLEAATAVGL…LRGLCEDTLE (129 aa)) the chain is on the extracellular side. Cystine bridges form between Cys-275/Cys-385 and Cys-303/Cys-370. 2 N-linked (GlcNAc...) asparagine glycosylation sites follow: Asn-284 and Asn-355. A helical membrane pass occupies residues 391 to 411 (GLLFLLLFSLLSAGALATVLC). Over 412-450 (SLPRAWALFPPSDDYEDTDDDDPFNPQESKRFVQWQSSI) the chain is Cytoplasmic. The interval 427–450 (EDTDDDDPFNPQESKRFVQWQSSI) is disordered. Phosphoserine is present on Ser-440.

This sequence belongs to the tweety family. In terms of assembly, homotetramer; disulfide-linked. Homodimer. In terms of processing, N-glycosylated. Contains high-mannose, hybrid and complex oligosaccharides.

Its subcellular location is the cell membrane. It carries out the reaction chloride(in) = chloride(out). The enzyme catalyses L-glutamate(out) = L-glutamate(in). Its function is as follows. Calcium-independent, swelling-dependent volume-regulated anion channel (VRAC-swell) which plays a pivotal role in the process of regulatory volume decrease (RVD) in the brain through the efflux of anions like chloride and organic osmolytes like glutamate. This chain is Protein tweety homolog 1 (TTYH1), found in Bos taurus (Bovine).